The chain runs to 847 residues: MAKPLTDQEKRRQISIRGIVGVENVAELKKSFNRHLHFTLVKDRNVATTRDYYFALAHTVRDHLVGRWIRTQQHYYDKCPKRVYYLSLEFYMGRTLQNTMINLGLQNACDEAIYQLGLDIEELEEIEEDAGLGNGGLGRLAACFLDSMATLGLAAYGYGIRYEYGIFNQKIRDGWQVEEADDWLRYGNPWEKSRPEFMLPVHFYGKVEHTNTGTKWIDTQVVLALPYDTPVPGYMNNTVNTMRLWSARAPNDFNLRDFNVGDYIQAVLDRNLAENISRVLYPNDNFFEGKELRLKQEYFVVAATLQDIIRRFKASKFGSTRGAGTVFDAFPDQVAIQLNDTHPALAIPELMRIFVDIEKLPWSKAWELTQKTFAYTNHTVLPEALERWPVDLVEKLLPRHLEIIYEINQKHLDRIVALFPKDVDRLRRMSLIEEEGSKRINMAHLCIVGSHAVNGVAKIHSDIVKTKVFKDFSELEPDKFQNKTNGITPRRWLLLCNPGLAELIAEKIGEDYVKDLSQLTKLHSFLGDDVFLRELAKVKQENKLKFSQFLETEYKVKINPSSMFDVQVKRIHEYKRQLLNCLHVITMYNRIKKDPKKLFVPRTVIIGGKAAPGYHMAKMIIKLITSVADVVNNDPMVGSKLKVIFLENYRVSLAEKVIPATDLSEQISTAGTEASGTGNMKFMLNGALTIGTMDGANVEMAEEAGEENLFIFGMRIDDVAALDKKGYEAKEYYEALPELKLVIDQIDNGFFSPKQPDLFKDIINMLFYHDRFKVFADYEAYVKCQDKVSQLYMNPKAWNTMVLKNIAASGKFSSDRTIKEYAQNIWNVEPSDLKISLSNESNKVNGN.

Residue Ala-2 is modified to N-acetylalanine. Ser-15 is modified (phosphoserine; by PHK; in form phosphorylase a). AMP contacts are provided by residues 43-45, Tyr-76, and Arg-310; that span reads DRN. Lys-364 is modified (N6-succinyllysine). Position 470 is an N6-acetyllysine (Lys-470). Phosphoserine is present on residues Ser-524, Ser-561, and Ser-639. At Lys-681 the chain carries N6-(pyridoxal phosphate)lysine. Lys-796 is subject to N6-acetyllysine.

This sequence belongs to the glycogen phosphorylase family. Homodimer; enzymatically active. Interacts with PPP1R3B; recruits the phosphatase PP1 which dephosphorylates and inactivates PYGL/glycogen phosphorylase. It depends on pyridoxal 5'-phosphate as a cofactor. Post-translationally, acetylation, which is up-regulated by glucose and insulin and down-regulated by glucagon, inhibits the glycogen phosphorylase activity by promoting PPP1R3B-mediated recruitment of phosphatase PP1 and Ser-15 dephosphorylation. In terms of processing, phosphorylation at Ser-15 converts inactive phosphorylase b into active phosphorylase a. Dephosphorylation of Ser-15 by phosphatase PP1 inactivates the enzyme.

Its subcellular location is the cytoplasm. It localises to the cytosol. The enzyme catalyses [(1-&gt;4)-alpha-D-glucosyl](n) + phosphate = [(1-&gt;4)-alpha-D-glucosyl](n-1) + alpha-D-glucose 1-phosphate. Its activity is regulated as follows. Allosterically regulated through the non-covalent binding of metabolites, being activated by AMP and inhibited by ATP, ADP, and glucose-6-phosphate. The activity is also controlled by post-translational modifications including phosphorylation and acetylation. Allosteric enzyme that catalyzes the rate-limiting step in glycogen catabolism, the phosphorolytic cleavage of glycogen to produce glucose-1-phosphate, and plays a central role in maintaining cellular and organismal glucose homeostasis. This Homo sapiens (Human) protein is Glycogen phosphorylase, liver form.